We begin with the raw amino-acid sequence, 168 residues long: PTS system glucose-specific EIIA component (168 aa).

The 105-residue stretch at 38–142 folds into the PTS EIIA type-1 domain; the sequence is DEVFSNKIVG…STLTPVIISN (105 aa). Zn(2+) is bound by residues histidine 75 and histidine 90. The Tele-phosphohistidine intermediate; for EIIA activity role is filled by histidine 90. Residue histidine 90 is modified to Phosphohistidine; by HPr.

Zn(2+) is required as a cofactor.

The protein resides in the cytoplasm. In terms of biological role, the phosphoenolpyruvate-dependent sugar phosphotransferase system (sugar PTS), a major carbohydrate active transport system, catalyzes the phosphorylation of incoming sugar substrates concomitantly with their translocation across the cell membrane. The enzyme II complex composed of PtsG and Crr is involved in glucose transport. This chain is PTS system glucose-specific EIIA component (crr), found in Buchnera aphidicola subsp. Baizongia pistaciae (strain Bp).